The following is a 238-amino-acid chain: RNA-free ribonuclease P (238 aa).

It belongs to the HARP family.

It carries out the reaction Endonucleolytic cleavage of RNA, removing 5'-extranucleotides from tRNA precursor.. In terms of biological role, RNA-free RNase P that catalyzes the removal of the 5'-leader sequence from pre-tRNA to produce the mature 5'-terminus. This chain is RNA-free ribonuclease P, found in Hyperthermus butylicus (strain DSM 5456 / JCM 9403 / PLM1-5).